Here is a 271-residue protein sequence, read N- to C-terminus: uncharacterized protein (271 aa).

This sequence belongs to the HAD-like hydrolase superfamily.

This is an uncharacterized protein from Staphylococcus aureus (strain Mu50 / ATCC 700699).